The following is a 288-amino-acid chain: POU domain class 2-associating factor 2 (288 aa).

Residues 10–32 (KRVYQGVRVKHTVKDLLAEKRSG) form the OCA domain. Disordered stretches follow at residues 24-52 (DLLA…PFVQ) and 247-274 (PPKV…VKED). Over residues 35-48 (SNSRLNGSVSSSQS) the composition is skewed to low complexity.

It belongs to the POU2AF family. As to quaternary structure, interacts with POU2F3 (via the POU domain) in a DNA-dependent manner; this interaction recruits POU2AF2 to chromatin and increases POU2F3 transactivation activity. Expressed in tuft cells of colon mucosa, as well as in small intestine and thymus.

The protein localises to the cytoplasm. It localises to the cytosol. It is found in the nucleus. Functionally, transcriptional coactivator of POU2F3. This complex drives the development of tuft cells, a rare chemosensory cells that coordinate immune and neural functions within mucosal epithelial tissues. The polypeptide is POU domain class 2-associating factor 2 (Homo sapiens (Human)).